A 355-amino-acid polypeptide reads, in one-letter code: IgG receptor FcRn large subunit p51 (355 aa).

An N-terminal signal peptide occupies residues 1 to 24; sequence MRVPRSQPWGLALLLLLLPGTLRA. The tract at residues 25–111 is alpha-1; sequence AESHRSLLYH…ALKVFGDRDS (87 aa). Over 25-300 the chain is Extracellular; sequence AESHRSLLYH…LESPAKSSVP (276 aa). The segment at 112-201 is alpha-2; sequence YTLQGLLGCE…ERGRGNLEWK (90 aa). N-linked (GlcNAc...) asparagine glycosylation is present at Asn126. The alpha-3 stretch occupies residues 202-291; the sequence is EPPSMRLKAR…GPAQPLTVEL (90 aa). One can recognise an Ig-like C1-type domain in the interval 203–292; sequence PPSMRLKARP…PAQPLTVELE (90 aa). A disulfide bond links Cys222 and Cys276. The interval 293-298 is connecting peptide; it reads SPAKSS. The chain crosses the membrane as a helical span at residues 301-321; sequence VIGISIGFLLLMTVAAGGALL. Residues 322–355 are Cytoplasmic-facing; that stretch reads WRRRKGLPAPWIAFRGDDIGALLPTPGLSKDAES.

The protein belongs to the immunoglobulin superfamily. As to quaternary structure, fcRn complex consists of two subunits: p51, and p14 which is equivalent to beta-2-microglobulin. It forms an MHC class I-like heterodimer. Interacts with albumin/ALB; this interaction regulates ALB homeostasis. In terms of tissue distribution, expressed in liver and mammary gland of non-lactating animals. Expressed in hepatocytes and in epithelial cells of portal bile ductuli. Not expressed in the brances of portal veins or hepatic arteries. Expressed in the epithelial cells of the acini and ducti in the mammary gland with expression emphasized at the apical side. Not expressed in blood vessels of mammary gland.

Its subcellular location is the cell membrane. It is found in the endosome membrane. Functionally, cell surface receptor that transfers passive humoral immunity from the mother to the newborn. Binds to the Fc region of monomeric immunoglobulin gamma and mediates its selective uptake from milk. IgG in the milk is bound at the apical surface of the intestinal epithelium. The resultant FcRn-IgG complexes are transcytosed across the intestinal epithelium and IgG is released from FcRn into blood or tissue fluids. Throughout life, contributes to effective humoral immunity by recycling IgG and extending its half-life in the circulation. Mechanistically, monomeric IgG binding to FcRn in acidic endosomes of endothelial and hematopoietic cells recycles IgG to the cell surface where it is released into the circulation. In addition of IgG, regulates homeostasis of the other most abundant circulating protein albumin/ALB. The protein is IgG receptor FcRn large subunit p51 of Camelus dromedarius (Dromedary).